A 641-amino-acid chain; its full sequence is 1-phosphatidylinositol 4,5-bisphosphate phosphodiesterase zeta-1 (641 aa).

The EF-hand domain occupies 35–70 (CSYIHVKRIFKDNDRLKQGRITIEEFRAIYRILTHR). The PI-PLC X-box domain maps to 155-299 (QDMTHPLNDY…LKFKVLVKNK (145 aa)). Active-site residues include histidine 170 and histidine 215. Positions 382 to 498 (LSDLVIYTKA…GYILKPHFLR (117 aa)) constitute a PI-PLC Y-box domain. The 125-residue stretch at 498–622 (RESESYFNPS…KGYRRVPLFS (125 aa)) folds into the C2 domain.

As to quaternary structure, interacts via its C2 domain with PtdIns(3)P and, to a lesser extent, PtdIns(5)P in vitro. It depends on Ca(2+) as a cofactor.

Its subcellular location is the nucleus. It is found in the cytoplasm. The protein localises to the perinuclear region. It catalyses the reaction a 1,2-diacyl-sn-glycero-3-phospho-(1D-myo-inositol-4,5-bisphosphate) + H2O = 1D-myo-inositol 1,4,5-trisphosphate + a 1,2-diacyl-sn-glycerol + H(+). In terms of biological role, the production of the second messenger molecules diacylglycerol (DAG) and inositol 1,4,5-trisphosphate (IP3) is mediated by activated phosphatidylinositol-specific phospholipase C enzymes. In vitro, hydrolyzes PtdIns(4,5)P2 in a Ca(2+)-dependent manner. Triggers intracellular Ca(2+) oscillations in oocytes solely during M phase and is involved in inducing oocyte activation and initiating embryonic development up to the blastocyst stage. Is therefore a strong candidate for the egg-activating soluble sperm factor that is transferred from the sperm into the egg cytoplasm following gamete membrane fusion. May exert an inhibitory effect on phospholipase-C-coupled processes that depend on calcium ions and protein kinase C, including CFTR trafficking and function. The polypeptide is 1-phosphatidylinositol 4,5-bisphosphate phosphodiesterase zeta-1 (Macaca fascicularis (Crab-eating macaque)).